A 119-amino-acid polypeptide reads, in one-letter code: Large ribosomal subunit protein uL18 (119 aa).

Belongs to the universal ribosomal protein uL18 family. Part of the 50S ribosomal subunit; part of the 5S rRNA/L5/L18/L25 subcomplex. Contacts the 5S and 23S rRNAs.

This is one of the proteins that bind and probably mediate the attachment of the 5S RNA into the large ribosomal subunit, where it forms part of the central protuberance. This is Large ribosomal subunit protein uL18 from Clostridium botulinum (strain Langeland / NCTC 10281 / Type F).